The primary structure comprises 521 residues: Protein translocase subunit SecD (521 aa).

The next 6 membrane-spanning stretches (helical) occupy residues 8 to 28 (LKLA…LPNG), 359 to 379 (AGIL…VLFY), 388 to 408 (IALL…EATL), 410 to 430 (LPGM…NILI), 459 to 479 (IVDS…FGTG), and 483 to 503 (GFAL…LLLS).

Belongs to the SecD/SecF family. SecD subfamily. Forms a complex with SecF. Part of the essential Sec protein translocation apparatus which comprises SecA, SecYEG and auxiliary proteins SecDF-YajC and YidC.

It is found in the cell inner membrane. In terms of biological role, part of the Sec protein translocase complex. Interacts with the SecYEG preprotein conducting channel. SecDF uses the proton motive force (PMF) to complete protein translocation after the ATP-dependent function of SecA. This Acetobacter pasteurianus (strain NBRC 105184 / IFO 3283-01) protein is Protein translocase subunit SecD.